The chain runs to 407 residues: MTGRHSPHRQTSPSPRPVEKMPRFQREHGASHRYTPMGKRPAAPANTGSHRGALLGRLNGDPERKGEFTAVSKLLKSRGYIPEARTALIEWVEKEGARRGGFEVMCGSILLPGHDESGRAIDDIFRDMSRSVRGEVASPIDELLFRVGNLLEVYVETTTGKPVPAKGLWGVVQVESTVTGIPKMIHVCLDRSLGVGYKCSFAKLWKKTIEELLGTGVGTTNPHCWFTRTIHSDAIQASFDGLNMIFELFGGRVRTGRVSPEGERRVFHTRCLGDDSFNALFAATVHDPTVSRAVFEARVRTVQTSYPAWYTFGDMWTPAPNNVGWVTTPEGSWCYDIRVRDLYNDPNKMSVTPAAAAPPGVPKPEHGEELEADPWKPSSTIGSPAPNLCALYTSGDSVELHAPLLPL.

Disordered stretches follow at residues 1–62 and 350–379; these read MTGR…NGDP and SVTP…KPSS. Residues 17–30 show a composition bias toward basic and acidic residues; sequence PVEKMPRFQREHGA.

This is an uncharacterized protein from Ictaluridae (bullhead catfishes).